A 329-amino-acid polypeptide reads, in one-letter code: Anthranilate phosphoribosyltransferase (329 aa).

5-phospho-alpha-D-ribose 1-diphosphate contacts are provided by residues G78, 81-82, 88-91, 106-114, and S118; these read GD, NLST, and KHGNRAASS. G78 is an anthranilate binding site. Position 90 (S90) interacts with Mg(2+). Residue N109 coordinates anthranilate. R164 is an anthranilate binding site. Positions 221 and 222 each coordinate Mg(2+).

Belongs to the anthranilate phosphoribosyltransferase family. Homodimer. The cofactor is Mg(2+).

It catalyses the reaction N-(5-phospho-beta-D-ribosyl)anthranilate + diphosphate = 5-phospho-alpha-D-ribose 1-diphosphate + anthranilate. Its pathway is amino-acid biosynthesis; L-tryptophan biosynthesis; L-tryptophan from chorismate: step 2/5. Catalyzes the transfer of the phosphoribosyl group of 5-phosphorylribose-1-pyrophosphate (PRPP) to anthranilate to yield N-(5'-phosphoribosyl)-anthranilate (PRA). The chain is Anthranilate phosphoribosyltransferase from Thermus thermophilus (strain ATCC BAA-163 / DSM 7039 / HB27).